The primary structure comprises 369 residues: Septin-5 (369 aa).

Residue Thr13 is modified to Phosphothreonine. One can recognise a Septin-type G domain in the interval 41-314 (KGFDFTLMVA…ENYRAHCIQQ (274 aa)). A G1 motif region spans residues 51–58 (GESGLGKS). GTP-binding positions include 51-58 (GESGLGKS), Thr85, and Gly111. The tract at residues 108–111 (DTPG) is G3 motif. Omega-N-methylarginine is present on Arg168. Positions 189 to 192 (AKAD) are G4 motif. 190 to 198 (KADCLVPSE) is a GTP binding site. The residue at position 225 (Ser225) is a Phosphoserine. GTP-binding residues include Gly248 and Arg263. Ser327 carries the phosphoserine modification. Phosphothreonine is present on Thr336. Positions 338–369 (DAETEKLIRMKDEELRRMQEMLQKMKQQMQDQ) form a coiled coil.

This sequence belongs to the TRAFAC class TrmE-Era-EngA-EngB-Septin-like GTPase superfamily. Septin GTPase family. As to quaternary structure, septins polymerize into heterooligomeric protein complexes that form filaments, and can associate with cellular membranes, actin filaments and microtubules. GTPase activity is required for filament formation. Interacts with SEPTIN2 and SEPTIN5. Interaction with SEPTIN4 not detected. In platelets, associated with a complex containing STX4. Interacts with PRKN; this interaction leads to SEPTIN5 ubiquitination and degradation. Interacts with DYRK1A. Interacts with STX1A; in the cerebellar cortex. Phosphorylated by DYRK1A.

It is found in the cytoplasm. It localises to the cytoskeleton. Filament-forming cytoskeletal GTPase. Involved in cytokinesis (Potential). May play a role in platelet secretion. This chain is Septin-5, found in Mus musculus (Mouse).